The sequence spans 405 residues: Accessory Sec system protein translocase subunit SecY2 (405 aa).

10 helical membrane passes run 14 to 34, 65 to 85, 104 to 124, 131 to 151, 156 to 176, 191 to 211, 247 to 267, 285 to 305, 343 to 363, and 368 to 388; these read LFTS…LPFV, IFSV…MFSF, MYLT…RLPV, ILVV…LVWL, ASMG…LNIP, GIIV…ALMY, MYVM…GFIF, PLWV…FAFV, FSVI…LFVL, and LLRL…IFTI.

It belongs to the SecY/SEC61-alpha family. SecY2 subfamily. As to quaternary structure, component of the accessory SecA2/SecY2 protein translocase complex required to export cell wall proteins. May form heterotrimers with SecE and SecG subunits.

It is found in the cell membrane. Its function is as follows. Part of the accessory SecA2/SecY2 system specifically required for export of possible cell wall proteins. The central subunit of a protein translocation channel. This Streptococcus pneumoniae serotype 4 (strain ATCC BAA-334 / TIGR4) protein is Accessory Sec system protein translocase subunit SecY2.